The following is a 178-amino-acid chain: Stathmin-2-B (178 aa).

The SLD domain occupies 38 to 178; that stretch reads DDMEVKQLNK…KNKEQLELSG (141 aa). A coiled-coil region spans residues 75–178; sequence KRKDVSLEEI…KNKEQLELSG (104 aa).

The protein belongs to the stathmin family. Nervous tissue.

It is found in the cytoplasm. Its subcellular location is the membrane. The protein localises to the cell projection. It localises to the lamellipodium. This chain is Stathmin-2-B (stmn2-b), found in Xenopus laevis (African clawed frog).